The sequence spans 707 residues: 65-kDa microtubule-associated protein 3 (707 aa).

Coiled-coil stretches lie at residues 49 to 84, 157 to 179, 269 to 289, 354 to 374, and 464 to 486; these read LEVYRRKVDQANRCRAQLRQAIADAEAQLAAICSAM, NLSMRKLEELHCQLQVLQKEKID, QQEYQHITCNIAASEHEITEA, IVDATMVLEHLEQHISKIKEE, and LEEYNILRQEREEEHRRQRDQKK. The segment at 495–574 is disordered; the sequence is QEALYGSKPS…PSRKQSMNPS (80 aa). Low complexity predominate over residues 500–512; it reads GSKPSPSKPLGGK. Residues Ser504 and Ser528 each carry the phosphoserine modification.

The protein belongs to the MAP65/ASE1 family. Forms a dimer. Binds to microtubules (MT) during cell division. Bundles polymerized MT via the formation of 25-nm crossbridges with centrally located endocytic MT, and midline phragmoplast MT. As to expression, expressed in all tissues enriched in dividing cells, such as the root and shoot apical meristem, foliar primordia, and young leaves, and embryos.

The protein resides in the nucleus. It localises to the cytoplasm. Its subcellular location is the cytoskeleton. The protein localises to the phragmoplast. Microtubule-associated protein that plays a critical role in organizing the mitotic microtubule array during both early and late mitosis in all plant organs. Essential for the cytokinesis, especially in roots, by maintaining the integrity of the overlapped microtubules in the phragmoplast. Required during root morphogenesis. Needed for giant cell development during root knot nematode infection, where cytokinesis is initiated but not completed. This chain is 65-kDa microtubule-associated protein 3 (MAP65-3), found in Arabidopsis thaliana (Mouse-ear cress).